The chain runs to 397 residues: Tryptophan synthase beta chain (397 aa).

N6-(pyridoxal phosphate)lysine is present on lysine 91.

This sequence belongs to the TrpB family. In terms of assembly, tetramer of two alpha and two beta chains. Pyridoxal 5'-phosphate serves as cofactor.

The catalysed reaction is (1S,2R)-1-C-(indol-3-yl)glycerol 3-phosphate + L-serine = D-glyceraldehyde 3-phosphate + L-tryptophan + H2O. Its pathway is amino-acid biosynthesis; L-tryptophan biosynthesis; L-tryptophan from chorismate: step 5/5. The beta subunit is responsible for the synthesis of L-tryptophan from indole and L-serine. This Bacillus cereus (strain AH187) protein is Tryptophan synthase beta chain.